Reading from the N-terminus, the 302-residue chain is MDEKRLTHLQQLEAESIHIIREVAAEFENPVMLYSIGKDSSVMLHLARKAFYPGTLPFPLLHVDTGWKFREMYEFRDRTAKNYGFELLVHRNLQGEAMGINPFVHGSAKHTDIMKTEGLKQALDKYGFDAAFGGARRDEEKSRAKERIYSFRDRSHRWDPKNQRPELWRNYNGQINKGESIRVFPLSNWTELDVWQYIYLEQIDIVPLYFAKLRPVLEREGTLIMVDDNRIDLKPGEVISQRKVRFRTLGCWPLTGAVKSDAETLPEIIEEMLISTTSERQGRLIDSDQSASMELKKRQGYF.

It belongs to the PAPS reductase family. CysD subfamily. As to quaternary structure, heterodimer composed of CysD, the smaller subunit, and CysN.

It carries out the reaction sulfate + ATP + H(+) = adenosine 5'-phosphosulfate + diphosphate. It participates in sulfur metabolism; hydrogen sulfide biosynthesis; sulfite from sulfate: step 1/3. Its function is as follows. With CysN forms the ATP sulfurylase (ATPS) that catalyzes the adenylation of sulfate producing adenosine 5'-phosphosulfate (APS) and diphosphate, the first enzymatic step in sulfur assimilation pathway. APS synthesis involves the formation of a high-energy phosphoric-sulfuric acid anhydride bond driven by GTP hydrolysis by CysN coupled to ATP hydrolysis by CysD. This Photorhabdus laumondii subsp. laumondii (strain DSM 15139 / CIP 105565 / TT01) (Photorhabdus luminescens subsp. laumondii) protein is Sulfate adenylyltransferase subunit 2.